The primary structure comprises 449 residues: uncharacterized protein (449 aa).

Its subcellular location is the mitochondrion. This is an uncharacterized protein from Podospora anserina (strain S / ATCC MYA-4624 / DSM 980 / FGSC 10383) (Pleurage anserina).